The following is a 76-amino-acid chain: Vasotab (76 aa).

A signal peptide spans 1–20 (MKFALFSVLVVLLIATFVAA). One can recognise a Kazal-like domain in the interval 21-76 (DECPRICTADYRPVCGTPSGGRRSANRTFGNQCSLNAHNCLNKGDTYDKLHDGECK). 3 cysteine pairs are disulfide-bonded: cysteine 23–cysteine 60, cysteine 27–cysteine 53, and cysteine 35–cysteine 75.

As to expression, expressed by the salivary gland.

It is found in the secreted. Functionally, vasodilator protein that inhibits vasoconstriction of isolated rat femoral artery induced by phenylephrine. Since platelet aggregation and vasoconstriction are key hemostatic responses, particularly in small wounds, this protein likely participates in the antihemostatic responses during blood feeding. Blocks L-type calcium channels (Cav1/CACNA1) in left ventricular myocytes isolated from rat hearts. The polypeptide is Vasotab (Hybomitra bimaculata (Horse fly)).